Here is a 164-residue protein sequence, read N- to C-terminus: Crossover junction endodeoxyribonuclease RuvC (164 aa).

Catalysis depends on residues aspartate 7, glutamate 67, and aspartate 139. Mg(2+) contacts are provided by aspartate 7, glutamate 67, and aspartate 139.

It belongs to the RuvC family. Homodimer which binds Holliday junction (HJ) DNA. The HJ becomes 2-fold symmetrical on binding to RuvC with unstacked arms; it has a different conformation from HJ DNA in complex with RuvA. In the full resolvosome a probable DNA-RuvA(4)-RuvB(12)-RuvC(2) complex forms which resolves the HJ. Requires Mg(2+) as cofactor.

Its subcellular location is the cytoplasm. It carries out the reaction Endonucleolytic cleavage at a junction such as a reciprocal single-stranded crossover between two homologous DNA duplexes (Holliday junction).. Functionally, the RuvA-RuvB-RuvC complex processes Holliday junction (HJ) DNA during genetic recombination and DNA repair. Endonuclease that resolves HJ intermediates. Cleaves cruciform DNA by making single-stranded nicks across the HJ at symmetrical positions within the homologous arms, yielding a 5'-phosphate and a 3'-hydroxyl group; requires a central core of homology in the junction. The consensus cleavage sequence is 5'-(A/T)TT(C/G)-3'. Cleavage occurs on the 3'-side of the TT dinucleotide at the point of strand exchange. HJ branch migration catalyzed by RuvA-RuvB allows RuvC to scan DNA until it finds its consensus sequence, where it cleaves and resolves the cruciform DNA. The sequence is that of Crossover junction endodeoxyribonuclease RuvC from Geobacter metallireducens (strain ATCC 53774 / DSM 7210 / GS-15).